Reading from the N-terminus, the 380-residue chain is 1-deoxy-D-xylulose 5-phosphate reductoisomerase (380 aa).

8 residues coordinate NADPH: T10, G11, S12, I13, G35, R36, N37, and N121. K122 is a binding site for 1-deoxy-D-xylulose 5-phosphate. E123 contacts NADPH. D147 serves as a coordination point for Mn(2+). The 1-deoxy-D-xylulose 5-phosphate site is built by S148, E149, S173, and H196. E149 serves as a coordination point for Mn(2+). G202 is a binding site for NADPH. 4 residues coordinate 1-deoxy-D-xylulose 5-phosphate: S209, N214, K215, and E218. E218 serves as a coordination point for Mn(2+).

The protein belongs to the DXR family. Mg(2+) serves as cofactor. Requires Mn(2+) as cofactor.

The enzyme catalyses 2-C-methyl-D-erythritol 4-phosphate + NADP(+) = 1-deoxy-D-xylulose 5-phosphate + NADPH + H(+). It functions in the pathway isoprenoid biosynthesis; isopentenyl diphosphate biosynthesis via DXP pathway; isopentenyl diphosphate from 1-deoxy-D-xylulose 5-phosphate: step 1/6. Its function is as follows. Catalyzes the NADPH-dependent rearrangement and reduction of 1-deoxy-D-xylulose-5-phosphate (DXP) to 2-C-methyl-D-erythritol 4-phosphate (MEP). The polypeptide is 1-deoxy-D-xylulose 5-phosphate reductoisomerase (Agathobacter rectalis (strain ATCC 33656 / DSM 3377 / JCM 17463 / KCTC 5835 / VPI 0990) (Eubacterium rectale)).